A 101-amino-acid polypeptide reads, in one-letter code: Small ribosomal subunit protein uS14 (101 aa).

Belongs to the universal ribosomal protein uS14 family. Part of the 30S ribosomal subunit. Contacts proteins S3 and S10.

Binds 16S rRNA, required for the assembly of 30S particles and may also be responsible for determining the conformation of the 16S rRNA at the A site. This Ehrlichia chaffeensis (strain ATCC CRL-10679 / Arkansas) protein is Small ribosomal subunit protein uS14.